A 212-amino-acid polypeptide reads, in one-letter code: Adenylate kinase (212 aa).

Residue 10 to 15 (GAGKGT) coordinates ATP. Residues 30–59 (STGDMFRAAMANQTEMGRLAKSYIDKGELV) are NMP. Residues Thr-31, Arg-36, 57–59 (ELV), 86–89 (GYPR), and Gln-93 each bind AMP. The LID stretch occupies residues 127–159 (GRIINRKTGETFHKVFNPPVDYKEEDYYQREDD). Residues Arg-128 and 137–138 (TF) each bind ATP. 2 residues coordinate AMP: Arg-156 and Arg-167. Gln-195 provides a ligand contact to ATP.

Belongs to the adenylate kinase family. As to quaternary structure, monomer.

It localises to the cytoplasm. The enzyme catalyses AMP + ATP = 2 ADP. It participates in purine metabolism; AMP biosynthesis via salvage pathway; AMP from ADP: step 1/1. In terms of biological role, catalyzes the reversible transfer of the terminal phosphate group between ATP and AMP. Plays an important role in cellular energy homeostasis and in adenine nucleotide metabolism. The polypeptide is Adenylate kinase (Streptococcus agalactiae serotype III (strain NEM316)).